A 370-amino-acid chain; its full sequence is 4-hydroxy-3-methylbut-2-en-1-yl diphosphate synthase (flavodoxin) (370 aa).

[4Fe-4S] cluster-binding residues include Cys271, Cys274, Cys306, and Glu313.

This sequence belongs to the IspG family. Requires [4Fe-4S] cluster as cofactor.

The catalysed reaction is (2E)-4-hydroxy-3-methylbut-2-enyl diphosphate + oxidized [flavodoxin] + H2O + 2 H(+) = 2-C-methyl-D-erythritol 2,4-cyclic diphosphate + reduced [flavodoxin]. The protein operates within isoprenoid biosynthesis; isopentenyl diphosphate biosynthesis via DXP pathway; isopentenyl diphosphate from 1-deoxy-D-xylulose 5-phosphate: step 5/6. In terms of biological role, converts 2C-methyl-D-erythritol 2,4-cyclodiphosphate (ME-2,4cPP) into 1-hydroxy-2-methyl-2-(E)-butenyl 4-diphosphate. This chain is 4-hydroxy-3-methylbut-2-en-1-yl diphosphate synthase (flavodoxin), found in Actinobacillus pleuropneumoniae serotype 5b (strain L20).